A 109-amino-acid chain; its full sequence is Small ribosomal subunit protein eS25z (109 aa).

Residues 1–36 are disordered; it reads MAPKKDKVPPPSSKPAKSGGGKQKKKKWSKGKQKEK. Residues 22-31 show a composition bias toward basic residues; that stretch reads KQKKKKWSKG.

It belongs to the eukaryotic ribosomal protein eS25 family.

The sequence is that of Small ribosomal subunit protein eS25z (RPS25A) from Arabidopsis thaliana (Mouse-ear cress).